The primary structure comprises 131 residues: Global transcriptional regulator Spx 2 (131 aa).

An intrachain disulfide couples Cys-10 to Cys-13.

Belongs to the ArsC family. Spx subfamily. Interacts with the C-terminal domain of the alpha subunit of the RNAP.

It is found in the cytoplasm. Global transcriptional regulator that plays a key role in stress response and exerts either positive or negative regulation of genes. Acts by interacting with the C-terminal domain of the alpha subunit of the RNA polymerase (RNAP). This interaction can enhance binding of RNAP to the promoter region of target genes and stimulate their transcription, or block interaction of RNAP with activator. The polypeptide is Global transcriptional regulator Spx 2 (Bacillus anthracis).